Here is a 215-residue protein sequence, read N- to C-terminus: Adenylate kinase (215 aa).

ATP is bound at residue 10–15; the sequence is GAGKGT. The interval 30–59 is NMP; it reads STGDMFRAAMKNNTELGKKAKSFMDNGDLV. Residues Thr31, Arg36, 57–59, 85–88, and Gln92 each bind AMP; these read DLV and GFPR. An LID region spans residues 126–163; that stretch reads GRWICRTCGKTYHEIYNPPKVPGKCDLDGGELYQREDD. Arg127 serves as a coordination point for ATP. Positions 130 and 133 each coordinate Zn(2+). 136 to 137 serves as a coordination point for ATP; that stretch reads TY. Zn(2+) is bound by residues Cys150 and Asp153. Arg160 and Arg171 together coordinate AMP. An ATP-binding site is contributed by Gln199.

This sequence belongs to the adenylate kinase family. In terms of assembly, monomer.

It localises to the cytoplasm. The enzyme catalyses AMP + ATP = 2 ADP. It participates in purine metabolism; AMP biosynthesis via salvage pathway; AMP from ADP: step 1/1. Catalyzes the reversible transfer of the terminal phosphate group between ATP and AMP. Plays an important role in cellular energy homeostasis and in adenine nucleotide metabolism. This Listeria innocua serovar 6a (strain ATCC BAA-680 / CLIP 11262) protein is Adenylate kinase.